The following is a 449-amino-acid chain: Bifunctional protein GlmU (449 aa).

Positions Met1–Lys226 are pyrophosphorylase. Residues Leu9 to Gly12, Lys23, Gln73, Gly78 to Thr79, Tyr100 to Asp102, Gly137, Glu151, Asn166, and Asn224 contribute to the UDP-N-acetyl-alpha-D-glucosamine site. Asp102 is a binding site for Mg(2+). A Mg(2+)-binding site is contributed by Asn224. A linker region spans residues Val227–Gln247. Residues Gly248–Lys449 form an N-acetyltransferase region. UDP-N-acetyl-alpha-D-glucosamine is bound by residues Arg330 and Lys348. The active-site Proton acceptor is His360. The UDP-N-acetyl-alpha-D-glucosamine site is built by Tyr363 and Asn374. Acetyl-CoA contacts are provided by residues Ala377, Asn383–Tyr384, Ser402, Ala420, and Arg437.

In the N-terminal section; belongs to the N-acetylglucosamine-1-phosphate uridyltransferase family. This sequence in the C-terminal section; belongs to the transferase hexapeptide repeat family. In terms of assembly, homotrimer. It depends on Mg(2+) as a cofactor.

It localises to the cytoplasm. The enzyme catalyses alpha-D-glucosamine 1-phosphate + acetyl-CoA = N-acetyl-alpha-D-glucosamine 1-phosphate + CoA + H(+). The catalysed reaction is N-acetyl-alpha-D-glucosamine 1-phosphate + UTP + H(+) = UDP-N-acetyl-alpha-D-glucosamine + diphosphate. Its pathway is nucleotide-sugar biosynthesis; UDP-N-acetyl-alpha-D-glucosamine biosynthesis; N-acetyl-alpha-D-glucosamine 1-phosphate from alpha-D-glucosamine 6-phosphate (route II): step 2/2. It functions in the pathway nucleotide-sugar biosynthesis; UDP-N-acetyl-alpha-D-glucosamine biosynthesis; UDP-N-acetyl-alpha-D-glucosamine from N-acetyl-alpha-D-glucosamine 1-phosphate: step 1/1. The protein operates within bacterial outer membrane biogenesis; LPS lipid A biosynthesis. In terms of biological role, catalyzes the last two sequential reactions in the de novo biosynthetic pathway for UDP-N-acetylglucosamine (UDP-GlcNAc). The C-terminal domain catalyzes the transfer of acetyl group from acetyl coenzyme A to glucosamine-1-phosphate (GlcN-1-P) to produce N-acetylglucosamine-1-phosphate (GlcNAc-1-P), which is converted into UDP-GlcNAc by the transfer of uridine 5-monophosphate (from uridine 5-triphosphate), a reaction catalyzed by the N-terminal domain. This chain is Bifunctional protein GlmU, found in Vesicomyosocius okutanii subsp. Calyptogena okutanii (strain HA).